A 156-amino-acid polypeptide reads, in one-letter code: Biotin carboxyl carrier protein of acetyl-CoA carboxylase (156 aa).

A Biotinyl-binding domain is found at 80–156; the sequence is GNVVRSPMVG…EFDQPLFTIV (77 aa). Position 122 is an N6-biotinyllysine (Lys-122).

Homodimer.

The protein operates within lipid metabolism; fatty acid biosynthesis. Functionally, this protein is a component of the acetyl coenzyme A carboxylase complex; first, biotin carboxylase catalyzes the carboxylation of the carrier protein and then the transcarboxylase transfers the carboxyl group to form malonyl-CoA. This Pseudomonas aeruginosa (strain ATCC 15692 / DSM 22644 / CIP 104116 / JCM 14847 / LMG 12228 / 1C / PRS 101 / PAO1) protein is Biotin carboxyl carrier protein of acetyl-CoA carboxylase (accB).